Here is a 158-residue protein sequence, read N- to C-terminus: MAVAELEKKGFELTTVEKLVGWARSGSMWPMTFGLACCAVEMMHVGAARYDLDRFGIIFRPSPRQSDVMIVAGTLCNKMAPALRKVYDQMPEPRWVISMGSCANGGGYYHYSYSVVRGCDRIVPVDVYVPGCPPTAEALLYGIIQLQNKIRRKPVLEA.

[4Fe-4S] cluster-binding residues include Cys-37, Cys-38, Cys-102, and Cys-132.

This sequence belongs to the complex I 20 kDa subunit family. In terms of assembly, NDH-1 is composed of 14 different subunits. Subunits NuoB, C, D, E, F, and G constitute the peripheral sector of the complex. [4Fe-4S] cluster serves as cofactor.

It localises to the cell inner membrane. It carries out the reaction a quinone + NADH + 5 H(+)(in) = a quinol + NAD(+) + 4 H(+)(out). Functionally, NDH-1 shuttles electrons from NADH, via FMN and iron-sulfur (Fe-S) centers, to quinones in the respiratory chain. Couples the redox reaction to proton translocation (for every two electrons transferred, four hydrogen ions are translocated across the cytoplasmic membrane), and thus conserves the redox energy in a proton gradient. This Legionella pneumophila (strain Paris) protein is NADH-quinone oxidoreductase subunit B.